Here is a 152-residue protein sequence, read N- to C-terminus: Transcriptional regulator MraZ (152 aa).

2 consecutive SpoVT-AbrB domains span residues 5-52 (ASAV…PLNQ) and 81-124 (ATEC…SESE).

This sequence belongs to the MraZ family. As to quaternary structure, forms oligomers.

Its subcellular location is the cytoplasm. The protein resides in the nucleoid. The polypeptide is Transcriptional regulator MraZ (Histophilus somni (strain 2336) (Haemophilus somnus)).